We begin with the raw amino-acid sequence, 495 residues long: Flagellin (495 aa).

The protein belongs to the bacterial flagellin family.

The protein resides in the secreted. It localises to the bacterial flagellum. Flagellin is the subunit protein which polymerizes to form the filaments of bacterial flagella. The sequence is that of Flagellin (fliC) from Salmonella typhimurium (strain LT2 / SGSC1412 / ATCC 700720).